The following is a 1118-amino-acid chain: Cytospin-A (1118 aa).

Disordered stretches follow at residues 1 to 157 and 198 to 221; these read MKKS…DGQI and GGKE…PHVS. 2 stretches are compositionally biased toward polar residues: residues 57-102 and 112-123; these read NPTS…TKET and SRASANKKQSAA. A compositionally biased stretch (basic and acidic residues) spans 144–153; that stretch reads SESRMSKSKS. Residues 204-215 show a composition bias toward acidic residues; it reads EGPEEEEEEEEE. Residues 225-264 adopt a coiled-coil conformation; sequence AADVESTLILLQEQNQAIREELNLLKSENRMLKDRLNALG. Positions 289–379 are disordered; sequence AGSGQSDGGG…RRGSSGNASE (91 aa). Residues 343 to 363 show a composition bias toward low complexity; sequence SSDDALDAPSGASSSSESECA. Coiled coils occupy residues 384–438 and 475–796; these read CLTE…MDSL and GRYM…RGRV. Disordered regions lie at residues 771-790, 837-876, and 920-1001; these read QEKN…RKQD, FDSA…PPAA, and SAAS…ERKD. Residues 838-855 are compositionally biased toward polar residues; sequence DSASQGPPSNGASVTPTV. The segment covering 861 to 872 has biased composition (pro residues); the sequence is PRTPLSPSPMKT. Polar residues predominate over residues 930-945; sequence QRVSNMDSTKTISVSR. Over residues 946-956 the composition is skewed to basic and acidic residues; it reads RSSEEMKRDMS. Over residues 961–986 the composition is skewed to low complexity; that stretch reads ASSTSLMAMSAASAPLSLSSSSPTAS. Residues 1012–1117 enclose the Calponin-homology (CH) domain; the sequence is GSKRNALLKW…YVTAIYKYFE (106 aa).

It belongs to the cytospin-A family. As to quaternary structure, may interact with both microtubules and actin cytoskeleton.

The protein resides in the cytoplasm. It is found in the cytoskeleton. Its subcellular location is the spindle. The protein localises to the cell junction. It localises to the gap junction. Involved in cytokinesis and spindle organization. May play a role in actin cytoskeleton organization and microtubule stabilization and hence required for proper cell adhesion and migration. The protein is Cytospin-A (specc1l) of Takifugu rubripes (Japanese pufferfish).